The following is a 317-amino-acid chain: Aspartate carbamoyltransferase catalytic subunit (317 aa).

R65 and T66 together coordinate carbamoyl phosphate. K93 is an L-aspartate binding site. Residues R115, H145, and Q148 each coordinate carbamoyl phosphate. Residues R178 and R233 each contribute to the L-aspartate site. Carbamoyl phosphate contacts are provided by G274 and P275.

Belongs to the aspartate/ornithine carbamoyltransferase superfamily. ATCase family. In terms of assembly, heterododecamer (2C3:3R2) of six catalytic PyrB chains organized as two trimers (C3), and six regulatory PyrI chains organized as three dimers (R2).

It carries out the reaction carbamoyl phosphate + L-aspartate = N-carbamoyl-L-aspartate + phosphate + H(+). Its pathway is pyrimidine metabolism; UMP biosynthesis via de novo pathway; (S)-dihydroorotate from bicarbonate: step 2/3. In terms of biological role, catalyzes the condensation of carbamoyl phosphate and aspartate to form carbamoyl aspartate and inorganic phosphate, the committed step in the de novo pyrimidine nucleotide biosynthesis pathway. This Methylobacillus flagellatus (strain ATCC 51484 / DSM 6875 / VKM B-1610 / KT) protein is Aspartate carbamoyltransferase catalytic subunit.